Reading from the N-terminus, the 406-residue chain is MSTLKNTFFITPPDTPTQAGPENIFYDFNDGARVLLPEGKWHVRLLDADSENILFCCDVDKGWVTSSKKYFVRFRIQVFRQGEETPLLDETLKLKDRPVLISFPTGTLGDLLGWFPYAERFQSLHKCRLECTMSQDIIDLLAPQYPQIQFSTPDKPRTVAPYATYRVGLYFGGDTNNQPVDFRKVGFHRSAGYILGVDPREAPVRLDLSAPRVIQEPYVCIATQSTCQAKYWNNGTGWSEVIAHLKSLGYRVMCIDRDAHYGQGFVWNHIPWGAEDFTGKLPLQERVNLLRHASFFIGLPSGLSWLAWATRIPVVLISGFSLPNSEFYTPWRVFNSHGCYGCWDDTSLNFDHHDFLWCPRHKNTDRQFECTRLITGAQVNGVINKLHRSLTEQGVEATLKKGVSNE.

Residues threonine 107, leucine 108, and glycine 109 each coordinate ADP-D-glycero-beta-D-manno-heptose. The Proton acceptor role is filled by aspartate 110. Positions 224, 226, 230, 257, 281, 302, and 326 each coordinate ADP-D-glycero-beta-D-manno-heptose. Residues cysteine 339, cysteine 342, cysteine 358, and cysteine 370 each coordinate Fe(3+).

This sequence belongs to the glycosyltransferase 9 family. Homododecamer composed of 6 homodimers forming a ring. Requires Fe(3+) as cofactor.

It catalyses the reaction ADP-D-glycero-beta-D-manno-heptose + L-seryl-[protein] = O-(D-glycero-alpha-D-manno-heptosyl)-L-seryl-[protein] + ADP + H(+). In terms of biological role, glycosylates adhesin TibA. Specifically adds anomer D-glycero-beta-D-manno-heptose. Cannot use ADP-L-glycero-beta-D-manno-heptose as a sugar donor. This chain is Autotransporter heptosyltransferase TibC, found in Escherichia coli O78:H11 (strain H10407 / ETEC).